A 427-amino-acid chain; its full sequence is Protein TIFY 6a (427 aa).

Residues 1–25 (MERDFLGAIWRKEEAAGKPEEHSDY) are compositionally biased toward basic and acidic residues. Disordered stretches follow at residues 1 to 32 (MERD…GGGA) and 128 to 154 (YGVA…HANP). Over residues 136–146 (FPSPSPSPRHP) the composition is skewed to pro residues. Positions 196-231 (QNPKVTQMTIFYDGLVNVFDNIPVEKAQELMLLASR) constitute a Tify domain. The segment at 296-327 (SFSSSNDSAGPKSGGLPLAVTPLSQASPSQPI) is disordered. Residues 317–327 (PLSQASPSQPI) show a composition bias toward polar residues. Positions 343-367 (PQARKASLARFLEKRKERVSSVAPY) match the Jas motif. The short motif at 345–352 (ARKASLAR) is the Nuclear localization signal element. Residues 361 to 427 (VSSVAPYPSS…QEPPSTKLQI (67 aa)) are disordered. 2 stretches are compositionally biased toward polar residues: residues 369–402 (SSKS…NNCE) and 411–427 (RNIS…KLQI).

It belongs to the TIFY/JAZ family. As to quaternary structure, interacts with COI1A. Interacts with COI1A and COI1B in a coronatine-dependent manner. Coronatine is an analog of jasmonoyl isoleucine (JA-Ile). Ubiquitinated. Targeted for degradation by the SCF(COI1) E3 ubiquitin ligase-proteasome pathway during jasmonate signaling.

It is found in the nucleus. Its function is as follows. Repressor of jasmonate responses. This is Protein TIFY 6a from Oryza sativa subsp. japonica (Rice).